A 1018-amino-acid polypeptide reads, in one-letter code: Integrator complex subunit 5 (1018 aa).

The tract at residues 1–26 is disordered; it reads MSALCDPPGAPGPPGPAPATHGPAPL. Serine 2 is subject to N-acetylserine. A compositionally biased stretch (pro residues) spans 8–17; the sequence is PGAPGPPGPA. At serine 278 the chain carries Phosphoserine. The next 3 membrane-spanning stretches (helical) occupy residues 533 to 553, 855 to 875, and 929 to 949; these read LATQLYAGLVVSLSGLLPLAF, LLFELLKLVAAAPPALCYCSV, and VFSQLAPFEVRLLLLSVWGFL.

The protein belongs to the Integrator subunit 5 family. As to quaternary structure, component of the Integrator complex, composed of core subunits INTS1, INTS2, INTS3, INTS4, INTS5, INTS6, INTS7, INTS8, INTS9/RC74, INTS10, INTS11/CPSF3L, INTS12, INTS13, INTS14 and INTS15. The core complex associates with protein phosphatase 2A subunits PPP2CA and PPP2R1A, to form the Integrator-PP2A (INTAC) complex.

The protein resides in the nucleus. Its subcellular location is the cytoplasm. The protein localises to the nucleus membrane. Functionally, component of the integrator complex, a multiprotein complex that terminates RNA polymerase II (Pol II) transcription in the promoter-proximal region of genes. The integrator complex provides a quality checkpoint during transcription elongation by driving premature transcription termination of transcripts that are unfavorably configured for transcriptional elongation: the complex terminates transcription by (1) catalyzing dephosphorylation of the C-terminal domain (CTD) of Pol II subunit POLR2A/RPB1 and SUPT5H/SPT5, (2) degrading the exiting nascent RNA transcript via endonuclease activity and (3) promoting the release of Pol II from bound DNA. The integrator complex is also involved in terminating the synthesis of non-coding Pol II transcripts, such as enhancer RNAs (eRNAs), small nuclear RNAs (snRNAs), telomerase RNAs and long non-coding RNAs (lncRNAs). Mediates recruitment of cytoplasmic dynein to the nuclear envelope, probably as component of the integrator complex. The protein is Integrator complex subunit 5 (Ints5) of Mus musculus (Mouse).